The sequence spans 421 residues: UDP-N-acetylglucosamine 1-carboxyvinyltransferase (421 aa).

A phosphoenolpyruvate-binding site is contributed by 22-23; sequence KN. Arginine 93 serves as a coordination point for UDP-N-acetyl-alpha-D-glucosamine. Cysteine 117 (proton donor) is an active-site residue. Cysteine 117 carries the post-translational modification 2-(S-cysteinyl)pyruvic acid O-phosphothioketal. UDP-N-acetyl-alpha-D-glucosamine is bound by residues 122-126, aspartate 308, and valine 330; that span reads RPVDL.

This sequence belongs to the EPSP synthase family. MurA subfamily.

It localises to the cytoplasm. It catalyses the reaction phosphoenolpyruvate + UDP-N-acetyl-alpha-D-glucosamine = UDP-N-acetyl-3-O-(1-carboxyvinyl)-alpha-D-glucosamine + phosphate. It functions in the pathway cell wall biogenesis; peptidoglycan biosynthesis. In terms of biological role, cell wall formation. Adds enolpyruvyl to UDP-N-acetylglucosamine. The sequence is that of UDP-N-acetylglucosamine 1-carboxyvinyltransferase from Stutzerimonas stutzeri (strain A1501) (Pseudomonas stutzeri).